The primary structure comprises 111 residues: Ig kappa chain V region 3368 (111 aa).

A framework-1 region spans residues 1-24 (ADIVMTQTPSSVSAAVGGTVTIKC). A complementarity-determining-1 region spans residues 25-35 (QASESIGNELA). Residues 36–50 (WYQQKPGQPPKLLIY) form a framework-2 region. The tract at residues 51–57 (RASKLAS) is complementarity-determining-2. The tract at residues 58-89 (GVSSRFKGSGSGTEFTLTISGVQCDDAGIYYC) is framework-3. Residues 90-101 (QQDWNSNNVVNN) are complementarity-determining-3. The framework-4 stretch occupies residues 102-111 (FGGGTEVVVK).

This is Ig kappa chain V region 3368 from Oryctolagus cuniculus (Rabbit).